A 304-amino-acid polypeptide reads, in one-letter code: Methionyl-tRNA formyltransferase (304 aa).

110–113 contacts (6S)-5,6,7,8-tetrahydrofolate; it reads SLLP.

It belongs to the Fmt family.

It catalyses the reaction L-methionyl-tRNA(fMet) + (6R)-10-formyltetrahydrofolate = N-formyl-L-methionyl-tRNA(fMet) + (6S)-5,6,7,8-tetrahydrofolate + H(+). Functionally, attaches a formyl group to the free amino group of methionyl-tRNA(fMet). The formyl group appears to play a dual role in the initiator identity of N-formylmethionyl-tRNA by promoting its recognition by IF2 and preventing the misappropriation of this tRNA by the elongation apparatus. The chain is Methionyl-tRNA formyltransferase from Sulfurovum sp. (strain NBC37-1).